Here is a 578-residue protein sequence, read N- to C-terminus: Probable arginine--tRNA ligase, mitochondrial (578 aa).

The N-terminal 16 residues, 1–16 (MACGFRRSIASQLSRV), are a transit peptide targeting the mitochondrion. L-arginine-binding positions include 133-135 (SPN), histidine 144, tyrosine 322, aspartate 326, and glutamine 350. The 'HIGH' region motif lies at 133-144 (SPNVAKKFHVGH). At lysine 568 the chain carries N6-acetyllysine.

Belongs to the class-I aminoacyl-tRNA synthetase family.

Its subcellular location is the mitochondrion membrane. The enzyme catalyses tRNA(Arg) + L-arginine + ATP = L-arginyl-tRNA(Arg) + AMP + diphosphate. Functionally, catalyzes the attachment of arginine to tRNA(Arg) in a two-step reaction: arginine is first activated by ATP to form Arg-AMP and then transferred to the acceptor end of tRNA(Arg). This Bos taurus (Bovine) protein is Probable arginine--tRNA ligase, mitochondrial (RARS2).